A 341-amino-acid polypeptide reads, in one-letter code: Paired box protein Pax-9 (341 aa).

Residues alanine 4–lysine 130 constitute a DNA-binding region (paired). Residues glutamate 7–threonine 63 are PAI subdomain. Residues threonine 82–lysine 130 are RED subdomain. Positions alanine 168–proline 189 are interaction with KDM5B.

As to quaternary structure, interacts with KDM5B.

Its subcellular location is the nucleus. Functionally, transcription factor required for normal development of thymus, parathyroid glands, ultimobranchial bodies, teeth, skeletal elements of skull and larynx as well as distal limbs. This Propithecus coquereli (Coquerel's sifaka) protein is Paired box protein Pax-9 (PAX9).